The primary structure comprises 320 residues: MKVNLDRNSSGFCIGVQGTIHVAEEKLRAEIGLYSLGDVVHNEVEVKRLESLGLVTIDDQAFRELRDAPVLIRAHGEPPSTYETARANNLEVTDTTCPVVAKLQRTARQLHLLGYQVIIYGKPVHPEVIGINGHAANSAVIIKHADLSDPAETAPLDLSRKTALISQTTMDVPGFYQLKENLETLFRNAGNPQEGPWTEVRDIDITLGLTGMQPTAPHVYKDTICRQVSSRNSKLHDFALSNDCIIFVAGKKSSNGQVLYNICRDANPRSYFIEDTGDLDEGWLKEANGSPVGSVGICGATSTPMWLLEKVARHIESLER.

Cys-13 serves as a coordination point for [4Fe-4S] cluster. (2E)-4-hydroxy-3-methylbut-2-enyl diphosphate-binding residues include His-41 and His-75. Positions 41 and 75 each coordinate dimethylallyl diphosphate. Residues His-41 and His-75 each contribute to the isopentenyl diphosphate site. Cys-97 lines the [4Fe-4S] cluster pocket. His-125 contacts (2E)-4-hydroxy-3-methylbut-2-enyl diphosphate. His-125 provides a ligand contact to dimethylallyl diphosphate. His-125 lines the isopentenyl diphosphate pocket. Glu-127 (proton donor) is an active-site residue. Thr-168 contributes to the (2E)-4-hydroxy-3-methylbut-2-enyl diphosphate binding site. Cys-225 serves as a coordination point for [4Fe-4S] cluster. (2E)-4-hydroxy-3-methylbut-2-enyl diphosphate contacts are provided by Ser-253, Ser-254, Asn-255, and Ser-302. Positions 253, 254, 255, and 302 each coordinate dimethylallyl diphosphate. Ser-253, Ser-254, Asn-255, and Ser-302 together coordinate isopentenyl diphosphate.

The protein belongs to the IspH family. Requires [4Fe-4S] cluster as cofactor.

The enzyme catalyses isopentenyl diphosphate + 2 oxidized [2Fe-2S]-[ferredoxin] + H2O = (2E)-4-hydroxy-3-methylbut-2-enyl diphosphate + 2 reduced [2Fe-2S]-[ferredoxin] + 2 H(+). It carries out the reaction dimethylallyl diphosphate + 2 oxidized [2Fe-2S]-[ferredoxin] + H2O = (2E)-4-hydroxy-3-methylbut-2-enyl diphosphate + 2 reduced [2Fe-2S]-[ferredoxin] + 2 H(+). It functions in the pathway isoprenoid biosynthesis; dimethylallyl diphosphate biosynthesis; dimethylallyl diphosphate from (2E)-4-hydroxy-3-methylbutenyl diphosphate: step 1/1. Its pathway is isoprenoid biosynthesis; isopentenyl diphosphate biosynthesis via DXP pathway; isopentenyl diphosphate from 1-deoxy-D-xylulose 5-phosphate: step 6/6. In terms of biological role, catalyzes the conversion of 1-hydroxy-2-methyl-2-(E)-butenyl 4-diphosphate (HMBPP) into a mixture of isopentenyl diphosphate (IPP) and dimethylallyl diphosphate (DMAPP). Acts in the terminal step of the DOXP/MEP pathway for isoprenoid precursor biosynthesis. This chain is 4-hydroxy-3-methylbut-2-enyl diphosphate reductase, found in Chlorobium luteolum (strain DSM 273 / BCRC 81028 / 2530) (Pelodictyon luteolum).